Here is a 366-residue protein sequence, read N- to C-terminus: Peptide chain release factor 2 (366 aa).

The residue at position 253 (Gln253) is an N5-methylglutamine.

Belongs to the prokaryotic/mitochondrial release factor family. Post-translationally, methylated by PrmC. Methylation increases the termination efficiency of RF2.

It is found in the cytoplasm. In terms of biological role, peptide chain release factor 2 directs the termination of translation in response to the peptide chain termination codons UGA and UAA. This Yersinia pseudotuberculosis serotype I (strain IP32953) protein is Peptide chain release factor 2.